The sequence spans 213 residues: Ephrin-A2 (213 aa).

The first 24 residues, 1-24 (MAPAQRPLLPLLLLLLPLPPPPFA), serve as a signal peptide directing secretion. Residues 34–174 (SDRYAVYWNR…RLKVYVRPTN (141 aa)) enclose the Ephrin RBD domain. A glycan (N-linked (GlcNAc...) asparagine) is linked at asparagine 42. Intrachain disulfides connect cysteine 73–cysteine 114 and cysteine 102–cysteine 163. N-linked (GlcNAc...) asparagine glycosylation is found at asparagine 174 and asparagine 188. The GPI-anchor amidated asparagine moiety is linked to residue asparagine 188. Residues 189 to 213 (NSCSSPGGCRLFLSTIPVLWTLLGS) constitute a propeptide, removed in mature form.

The protein belongs to the ephrin family. In terms of assembly, binds to the receptor tyrosine kinases EPHA3, EPHA4 and EPHA5. Interacts with EPHA8; activates EPHA8.

Its subcellular location is the cell membrane. Its function is as follows. Cell surface GPI-bound ligand for Eph receptors, a family of receptor tyrosine kinases which are crucial for migration, repulsion and adhesion during neuronal, vascular and epithelial development. Binds promiscuously Eph receptors residing on adjacent cells, leading to contact-dependent bidirectional signaling into neighboring cells. The signaling pathway downstream of the receptor is referred to as forward signaling while the signaling pathway downstream of the ephrin ligand is referred to as reverse signaling. With the EPHA2 receptor may play a role in bone remodeling through regulation of osteoclastogenesis and osteoblastogenesis. This Homo sapiens (Human) protein is Ephrin-A2 (EFNA2).